We begin with the raw amino-acid sequence, 248 residues long: Pulmonary surfactant-associated protein A (248 aa).

The signal sequence occupies residues 1-20 (MWLCPLALTLTLMAASGAAC). The Collagen-like domain occupies 31-100 (GIPGTPGSHG…PGERGPPGLP (70 aa)). The tract at residues 33–100 (PGTPGSHGLP…PGERGPPGLP (68 aa)) is disordered. Residues 42 to 51 (PGRDGRDGVK) are compositionally biased toward basic and acidic residues. Residues 54–65 (PGPPGPMGPPGD) are compositionally biased toward pro residues. Residues 134 to 247 (IGGKVFSTNG…CLYNRLTICE (114 aa)) form the C-type lectin domain. Disulfide bonds link Cys155-Cys246 and Cys224-Cys238. A glycan (N-linked (GlcNAc...) asparagine) is linked at Asn207. 4 residues coordinate Ca(2+): Glu215, Ala217, Asn234, and Asp235.

Belongs to the SFTPA family. In terms of assembly, oligomeric complex of 6 set of homotrimers.

It localises to the secreted. It is found in the extracellular space. The protein resides in the extracellular matrix. Its subcellular location is the surface film. In terms of biological role, in presence of calcium ions, it binds to surfactant phospholipids and contributes to lower the surface tension at the air-liquid interface in the alveoli of the mammalian lung and is essential for normal respiration. Enhances the expression of MYO18A/SP-R210 on alveolar macrophages. In Macaca mulatta (Rhesus macaque), this protein is Pulmonary surfactant-associated protein A (SFTPA1).